The chain runs to 602 residues: Leucine-rich repeat-containing protein 40 (602 aa).

S71 carries the phosphoserine modification. LRR repeat units follow at residues 83 to 104 (DLTK…LRLL), 106 to 127 (ALTV…IREL), 129 to 150 (NLQK…ITNL), 152 to 173 (NLKC…FEQL), 175 to 196 (NLED…FSSL), 198 to 219 (SLVR…INRM), 221 to 242 (RLKH…LAGM), 244 to 265 (SLEL…PSCS), 266 to 286 (LLKE…EHLK), 290 to 311 (SILV…IILL), 313 to 335 (SLER…GNLH), 336 to 356 (LKFL…IISK), 400 to 421 (TLKI…VFDA), 426 to 447 (IVTS…MVEL), 450 to 472 (MVSD…CVLQ), 473 to 494 (KLTF…MESL), 496 to 517 (RLQT…LYRI), 519 to 540 (TLET…KMKM), 543 to 564 (NLTT…LGNC), and 566 to 586 (NLRT…AILM).

This Homo sapiens (Human) protein is Leucine-rich repeat-containing protein 40 (LRRC40).